Consider the following 211-residue polypeptide: Ribosomal RNA large subunit methyltransferase E (211 aa).

Gly-60, Trp-62, Asp-80, Asp-96, and Asp-121 together coordinate S-adenosyl-L-methionine. Lys-161 (proton acceptor) is an active-site residue.

This sequence belongs to the class I-like SAM-binding methyltransferase superfamily. RNA methyltransferase RlmE family.

It localises to the cytoplasm. The enzyme catalyses uridine(2552) in 23S rRNA + S-adenosyl-L-methionine = 2'-O-methyluridine(2552) in 23S rRNA + S-adenosyl-L-homocysteine + H(+). Functionally, specifically methylates the uridine in position 2552 of 23S rRNA at the 2'-O position of the ribose in the fully assembled 50S ribosomal subunit. The polypeptide is Ribosomal RNA large subunit methyltransferase E (Cellvibrio japonicus (strain Ueda107) (Pseudomonas fluorescens subsp. cellulosa)).